Consider the following 156-residue polypeptide: Phosphopantetheine adenylyltransferase (156 aa).

Threonine 10 is a binding site for substrate. Residues 10–11 (TF) and histidine 18 contribute to the ATP site. 3 residues coordinate substrate: lysine 42, leucine 74, and arginine 88. ATP contacts are provided by residues 89–91 (GLR), glutamate 99, and 124–130 (NAFISSS).

It belongs to the bacterial CoaD family. In terms of assembly, homohexamer. The cofactor is Mg(2+).

It localises to the cytoplasm. The catalysed reaction is (R)-4'-phosphopantetheine + ATP + H(+) = 3'-dephospho-CoA + diphosphate. The protein operates within cofactor biosynthesis; coenzyme A biosynthesis; CoA from (R)-pantothenate: step 4/5. Functionally, reversibly transfers an adenylyl group from ATP to 4'-phosphopantetheine, yielding dephospho-CoA (dPCoA) and pyrophosphate. In Campylobacter curvus (strain 525.92), this protein is Phosphopantetheine adenylyltransferase.